Here is a 360-residue protein sequence, read N- to C-terminus: D-alanine--D-alanine ligase (360 aa).

The ATP-grasp domain occupies 146-352 (KLCVADAGIA…YRNLITRLLE (207 aa)). Residue 179 to 234 (EAQVSYPLFVKPASLGSSIGISKVHNREELHPALQAACALDWKVVVESTVKGREIE) participates in ATP binding. Mg(2+) contacts are provided by Asp-305, Glu-319, and Asn-321.

This sequence belongs to the D-alanine--D-alanine ligase family. Requires Mg(2+) as cofactor. It depends on Mn(2+) as a cofactor.

It is found in the cytoplasm. The enzyme catalyses 2 D-alanine + ATP = D-alanyl-D-alanine + ADP + phosphate + H(+). It functions in the pathway cell wall biogenesis; peptidoglycan biosynthesis. In terms of biological role, cell wall formation. The sequence is that of D-alanine--D-alanine ligase from Chlorobium chlorochromatii (strain CaD3).